The primary structure comprises 314 residues: Methionyl-tRNA formyltransferase (314 aa).

Residue 111–114 (SLLP) participates in (6S)-5,6,7,8-tetrahydrofolate binding.

The protein belongs to the Fmt family.

The catalysed reaction is L-methionyl-tRNA(fMet) + (6R)-10-formyltetrahydrofolate = N-formyl-L-methionyl-tRNA(fMet) + (6S)-5,6,7,8-tetrahydrofolate + H(+). Its function is as follows. Attaches a formyl group to the free amino group of methionyl-tRNA(fMet). The formyl group appears to play a dual role in the initiator identity of N-formylmethionyl-tRNA by promoting its recognition by IF2 and preventing the misappropriation of this tRNA by the elongation apparatus. The chain is Methionyl-tRNA formyltransferase from Nitrobacter winogradskyi (strain ATCC 25391 / DSM 10237 / CIP 104748 / NCIMB 11846 / Nb-255).